A 535-amino-acid polypeptide reads, in one-letter code: MMGAVQLPVETEACLHDDAASRPISDSNTVRVAVLRQHQYHSSVTYHRLDDNRLIPGVVGYSYLRDIADEGKKQSPSKQHARVIQAYSKIHSLLSPPREPGPIDSETKTREKKSSPVIVHDKRCAFIERLEPPPNSKADIVNTVFAQVNLRTPVGPPLDQFVNCRSSNIKINDLKDSANGLCRPITISTGICLFSSRLLGFIPTNGLSTTDGATETVIPPLPYSADATFYELETCARMAMTIAGLAVTAGTGGTAGSRPIVVRLDVPCLQYYCYPLELLQAGLVSWKYVQEWFRLVDRRHRQVAGLLKDTITHEVLRRGGDIQVEVTAGTIAATQLLRLSVFDRMELPSVDDILFVLKWVGPYQAAWREFLDILDDCQRPKDLRSVALMAYVFEVMYPALHQIATKSLHGNGEKSGRPLLIQVDDIAEWRIFDHAEKLLKRFKERQHGFYPLLVGVFPSPRIFTSEDQGRSTLFLHDPGLKILQTRSPSSNSEEGSCVVRPLDIIGQIYGREVQDTLGQLTRKHGLSAADGPESD.

Residues 93 to 114 (LLSPPREPGPIDSETKTREKKS) are disordered. The segment covering 105 to 114 (SETKTREKKS) has biased composition (basic and acidic residues). A Conserved DDXXE motif motif is present at residues 424–428 (DDIAE).

This sequence belongs to the arginine-containing cyclodipeptide synthase family.

The catalysed reaction is L-tryptophyl-tRNA(Trp) + L-arginyl-tRNA(Arg) = cyclo(L-arginyl-L-tryptophyl) + tRNA(Trp) + tRNA(Arg) + H(+). It participates in secondary metabolite biosynthesis. Functionally, arginine-containing cyclodipeptide synthase; part of the cluster that mediates the biosynthesis of a highly modified cyclo-arginine-tryptophan dipeptide (cRW). Within the pathway, AnoA acts as the scaffold-generating enzyme and is responsible for formation of the cyclo-Arg-Trp diketopiperazine (cRW) from L-arginyl-tRNA(Arg) + L-tryptophanyl-tRNA(Trp). Additional enzymes from the cluster then further modify the cyclo-Arg-Asp diketopiperazine (cRW) scaffold. The protein is Arginine-containing cyclodipeptide synthase anoA of Aspergillus nomiae (Aspergillus nomius).